Consider the following 490-residue polypeptide: MSQSVSERTRIKSDRYESGVIPYAKMGYWDASYAVKTTDVLALFRITPQPGVDPVEAAAAVAGESSTATWTVVWTDLLTACDRYRAKAYRVDPVPNAADQYFAFIAYECDLFEEGSLANLTASIIGNVFGFKAVAALRLEDMRIPHSYLKTFQGPATGIVVERERLNKYGTPLLGATVKPKLGLSGKNYGRVVYEGLKGGLDFLKDDENINSQPFMRWRERFLNCMEGINRASAATGEVKGSYLNVTAATMEEVYKRSEYAKEVGSIIIMIDLVMGYTAIQSMALWARENDMLLHLHRAGNSTYARQKNHGINFRVICKWMRMSGVDHIHAGTVVGKLEGDPLMIKGFYHTLRLTTLDVNLPYGLFFEMSWASLRRCMPVASGGIHCGQMHQLIHYLGDDVVLQFGGGTIGHPDGIQAGATANRVALESMVLARNEGADYFNQEVGPQILRNAAKTCGPLQSALDLWKDISFNYTSTDTADFAATSTANV.

Asn127 and Thr177 together coordinate substrate. Lys179 (proton acceptor) is an active-site residue. A substrate-binding site is contributed by Lys181. Positions 205, 207, and 208 each coordinate Mg(2+). Lys205 carries the N6-carboxylysine modification. The active-site Proton acceptor is His297. Substrate contacts are provided by Arg298, His330, and Ser382.

It belongs to the RuBisCO large chain family. Type I subfamily. As to quaternary structure, heterohexadecamer of 8 large chains and 8 small chains. The cofactor is Mg(2+).

It localises to the plastid. Its subcellular location is the chloroplast. The catalysed reaction is 2 (2R)-3-phosphoglycerate + 2 H(+) = D-ribulose 1,5-bisphosphate + CO2 + H2O. It carries out the reaction D-ribulose 1,5-bisphosphate + O2 = 2-phosphoglycolate + (2R)-3-phosphoglycerate + 2 H(+). In terms of biological role, ruBisCO catalyzes two reactions: the carboxylation of D-ribulose 1,5-bisphosphate, the primary event in carbon dioxide fixation, as well as the oxidative fragmentation of the pentose substrate in the photorespiration process. Both reactions occur simultaneously and in competition at the same active site. In Cylindrotheca sp. (strain N1) (Marine diatom), this protein is Ribulose bisphosphate carboxylase large chain.